The chain runs to 214 residues: Coiled-coil domain-containing protein 169 (214 aa).

Residues 29 to 154 (DAVQLSIFEL…NERRTYLAEM (126 aa)) are a coiled coil. Over residues 155-170 (SQGSGLHQVSKRQQVD) the composition is skewed to polar residues. Residues 155–214 (SQGSGLHQVSKRQQVDQLPRMQENLVKTGRYNPAKQKTVSAKRGPVKKITRPNHLPELHP) are disordered.

The protein belongs to the CCDC169 family.

The chain is Coiled-coil domain-containing protein 169 (CCDC169) from Homo sapiens (Human).